Reading from the N-terminus, the 223-residue chain is MAKSQLVSALFVFFFSLSPIYGDFDYMQLVLTWPRSFCYPRGFCNRIPPNNFTIHGLWPDKKPMRGQLQFCTSDDYIKFTPGSVLDALDHHWIQLKFEREIGIRDQPLWKDQYKKHGTCCLPRYNQLQYFLLAMRLKEKFDLLTTLRTHGITPGTKHTFKKIQDAIKTVTQEVPDLKCVENIQGVLELYEIGICFTPEADSLFPCRQSKSCHPTENPLILFRL.

The first 22 residues, 1–22 (MAKSQLVSALFVFFFSLSPIYG), serve as a signal peptide directing secretion. The cysteines at positions 38 and 44 are disulfide-linked. Asn-51 carries N-linked (GlcNAc...) asparagine glycosylation. The active-site Proton donor is the His-55. RNA is bound by residues His-55 and 94–95 (QL). Intrachain disulfides connect Cys-71–Cys-119, Cys-178–Cys-211, and Cys-194–Cys-205. Gln-112 is an active-site residue. Residue 115–116 (KH) participates in RNA binding. Residue His-116 is the Proton acceptor of the active site.

It belongs to the RNase T2 family. As to expression, pistil.

The protein resides in the secreted. It localises to the extracellular space. The enzyme catalyses a ribonucleotidyl-ribonucleotide-RNA + H2O = a 3'-end 3'-phospho-ribonucleotide-RNA + a 5'-end dephospho-ribonucleoside-RNA + H(+). Functionally, self-incompatibility (SI) is the inherited ability of a flowering plant to prevent self-fertilization by discriminating between self and non-self pollen during pollination. In many species of the Solanaceae, self-incompatibility is controlled by the single, multiallelic locus S. This stylar glycoprotein is associated with expression of self-incompatibility in potato. This Solanum tuberosum (Potato) protein is Ribonuclease S-2.